The sequence spans 73 residues: Kappa-scoloptoxin(03)-Ssm1b (73 aa).

A signal peptide spans 1-23 (MKPSMAILLVIALIIFSLDKSYS). Cystine bridges form between Cys32/Cys58, Cys41/Cys57, and Cys44/Cys67.

Post-translationally, contains 3 disulfide bonds. Expressed by the venom gland.

The protein resides in the secreted. Functionally, inhibits voltage-gated potassium channels. The sequence is that of Kappa-scoloptoxin(03)-Ssm1b from Scolopendra mutilans (Chinese red-headed centipede).